A 185-amino-acid chain; its full sequence is Ribosome-recycling factor (185 aa).

Belongs to the RRF family.

Its subcellular location is the cytoplasm. Functionally, responsible for the release of ribosomes from messenger RNA at the termination of protein biosynthesis. May increase the efficiency of translation by recycling ribosomes from one round of translation to another. The sequence is that of Ribosome-recycling factor from Francisella tularensis subsp. holarctica (strain FTNF002-00 / FTA).